The following is a 60-amino-acid chain: Large ribosomal subunit protein bL32 (60 aa).

The disordered stretch occupies residues 1-60 (MAVQQNKKSPSKRGMHRSHDFLVNPPTAIEPTTGESHLRHHISPNGFYRGRKILKTKADE). The span at 49 to 60 (RGRKILKTKADE) shows a compositional bias: basic residues.

Belongs to the bacterial ribosomal protein bL32 family.

This chain is Large ribosomal subunit protein bL32, found in Bordetella avium (strain 197N).